The sequence spans 135 residues: Retinol-binding protein 1 (135 aa).

The residue at position 9 (tryptophan 9) is an Omega-N-methylarginine. Residues 22 to 32 (RALDVNVALRK) are important for interaction with STRA6. The all-trans-retinol site is built by lysine 41, methionine 63, and glutamine 109.

The protein belongs to the calycin superfamily. Fatty-acid binding protein (FABP) family. As to quaternary structure, interacts (only as retinol-free apoprotein) with STRA6. In terms of tissue distribution, detected in nearly all the tissues with higher expression in adult ovary, pancreas, pituitary gland and adrenal gland, and fetal liver.

It is found in the cytoplasm. Its subcellular location is the lipid droplet. Functionally, cytoplasmic retinol-binding protein. Accepts retinol from the transport protein STRA6, and thereby contributes to retinol uptake, storage and retinoid homeostasis. The chain is Retinol-binding protein 1 (RBP1) from Homo sapiens (Human).